Reading from the N-terminus, the 98-residue chain is Large ribosomal subunit protein uL23 (98 aa).

It belongs to the universal ribosomal protein uL23 family. In terms of assembly, part of the 50S ribosomal subunit. Contacts protein L29, and trigger factor when it is bound to the ribosome.

In terms of biological role, one of the early assembly proteins it binds 23S rRNA. One of the proteins that surrounds the polypeptide exit tunnel on the outside of the ribosome. Forms the main docking site for trigger factor binding to the ribosome. This Limosilactobacillus reuteri (strain DSM 20016) (Lactobacillus reuteri) protein is Large ribosomal subunit protein uL23.